The chain runs to 137 residues: BolA-like protein 1 (137 aa).

Serine 81 carries the post-translational modification Phosphoserine. The tract at residues arginine 115 to serine 137 is disordered.

It belongs to the BolA/IbaG family. Interacts with GLRX5.

The protein localises to the mitochondrion. In terms of biological role, acts as a mitochondrial iron-sulfur (Fe-S) cluster assembly factor that facilitates (Fe-S) cluster insertion into a subset of mitochondrial proteins. Probably acts together with the monothiol glutaredoxin GLRX5. May protect cells against oxidative stress. In Mus musculus (Mouse), this protein is BolA-like protein 1 (Bola1).